The primary structure comprises 183 residues: Glutamyl-tRNA(Gln) amidotransferase subunit F, mitochondrial (183 aa).

A mitochondrion-targeting transit peptide spans 1–23 (MSRMLNQIPRLITRSFRTSSVGY).

This sequence belongs to the GatF family. Subunit of the heterotrimeric GatFAB amidotransferase (AdT) complex, composed of A, B and F subunits.

The protein localises to the mitochondrion inner membrane. The catalysed reaction is L-glutamyl-tRNA(Gln) + L-glutamine + ATP + H2O = L-glutaminyl-tRNA(Gln) + L-glutamate + ADP + phosphate + H(+). Allows the formation of correctly charged Gln-tRNA(Gln) through the transamidation of misacylated Glu-tRNA(Gln) in the mitochondria. The reaction takes place in the presence of glutamine and ATP through an activated gamma-phospho-Glu-tRNA(Gln). Required for proper protein synthesis within the mitochondrion. This is Glutamyl-tRNA(Gln) amidotransferase subunit F, mitochondrial from Debaryomyces hansenii (strain ATCC 36239 / CBS 767 / BCRC 21394 / JCM 1990 / NBRC 0083 / IGC 2968) (Yeast).